Here is a 473-residue protein sequence, read N- to C-terminus: UDP-N-acetylmuramate--L-alanine ligase (473 aa).

112–118 contributes to the ATP binding site; that stretch reads GTHGKTT.

It belongs to the MurCDEF family.

Its subcellular location is the cytoplasm. The enzyme catalyses UDP-N-acetyl-alpha-D-muramate + L-alanine + ATP = UDP-N-acetyl-alpha-D-muramoyl-L-alanine + ADP + phosphate + H(+). It functions in the pathway cell wall biogenesis; peptidoglycan biosynthesis. In terms of biological role, cell wall formation. In Nitrosomonas eutropha (strain DSM 101675 / C91 / Nm57), this protein is UDP-N-acetylmuramate--L-alanine ligase.